The following is a 281-amino-acid chain: MSSYFVNSFCGRYPNGADFQLHNYGDHSTANDQYRDSTAMHSSRYGYGYNGMDLTVGRAGTGHFVGNERTQGYSPSHSAATTPSVEPVRYTQSANSTGTSSLSPPPDPLPCSSVASSSPVTETQSQHRAVKNSITTPCSTPCSSSNGGTLLLNRDCVSKASPLEEEKPAGSAPTTPQNVSDSTQPQIYPWMRKLHINHDLAGPEGKRARTAYTRYQTLELEKEFHFNRYLTRRRRIEIAHALCLSERQIKIWFQNRRMKWKKDNKLKSMNMAAAGGGGYRP.

2 disordered regions span residues 65–144 (VGNE…PCSS) and 162–183 (PLEEEKPAGSAPTTPQNVSDST). 2 stretches are compositionally biased toward polar residues: residues 68 to 99 (ERTQGYSPSHSAATTPSVEPVRYTQSANSTGT) and 114 to 127 (VASSSPVTETQSQH). Low complexity predominate over residues 132-144 (NSITTPCSTPCSS). Residues 172 to 183 (APTTPQNVSDST) are compositionally biased toward polar residues. The Antp-type hexapeptide motif lies at 187 to 192 (IYPWMR). The segment at residues 205–264 (GKRARTAYTRYQTLELEKEFHFNRYLTRRRRIEIAHALCLSERQIKIWFQNRRMKWKKDN) is a DNA-binding region (homeobox).

This sequence belongs to the Antp homeobox family.

It localises to the nucleus. Sequence-specific transcription factor which is part of a developmental regulatory system that provides cells with specific positional identities on the anterior-posterior axis. The chain is Homeobox protein Hox-A5 (hoxa5) from Morone saxatilis (Striped bass).